We begin with the raw amino-acid sequence, 416 residues long: Glutamyl-tRNA reductase (416 aa).

Substrate-binding positions include Thr49–Arg52, Ser105, Glu110–Gln112, and Gln116. Cys50 serves as the catalytic Nucleophile. Gly185–Ile190 contributes to the NADP(+) binding site.

This sequence belongs to the glutamyl-tRNA reductase family. In terms of assembly, homodimer.

It carries out the reaction (S)-4-amino-5-oxopentanoate + tRNA(Glu) + NADP(+) = L-glutamyl-tRNA(Glu) + NADPH + H(+). It participates in porphyrin-containing compound metabolism; protoporphyrin-IX biosynthesis; 5-aminolevulinate from L-glutamyl-tRNA(Glu): step 1/2. In terms of biological role, catalyzes the NADPH-dependent reduction of glutamyl-tRNA(Glu) to glutamate 1-semialdehyde (GSA). The protein is Glutamyl-tRNA reductase of Shewanella piezotolerans (strain WP3 / JCM 13877).